A 379-amino-acid chain; its full sequence is Transcription termination factor 1b, mitochondrial (379 aa).

Residues 1–37 (MASRNIWCVRRNFLFDLRGWMLQYSAEVFLKSISFRT) constitute a mitochondrion transit peptide. Interaction with DNA stretches follow at residues 151 to 152 (RS), 229 to 233 (QSTKR), 306 to 313 (SEKKFNDK), 337 to 340 (SINT), and 366 to 373 (SQRRYEAK).

Belongs to the mTERF family. Monomer. Phosphoprotein with mostly four phosphate groups. While the DNA-binding activity is unaffected by the phosphorylation state, only the phosphorylated form of the protein is active for termination activity. Functioning seems to be regulated by phosphorylation. Expressed strongly in the heart and at lower levels in brain, liver and kidney.

The protein resides in the mitochondrion. Its function is as follows. Transcription termination factor. Binds to a 28 bp region within the tRNA(Leu(uur)) gene at a position immediately adjacent to and downstream of the 16S rRNA gene; this region comprises a tridecamer sequence critical for directing accurate termination. Binds DNA along the major grove and promotes DNA bending and partial unwinding. Promotes base flipping. Transcription termination activity appears to be polarized with highest specificity for transcripts initiated on the light strand. This is Transcription termination factor 1b, mitochondrial from Mus musculus (Mouse).